Consider the following 330-residue polypeptide: Ribosomal RNA small subunit methyltransferase H (330 aa).

Residues 35 to 37 (GGY), Asp-53, Phe-80, Asp-101, and Gln-108 each bind S-adenosyl-L-methionine.

The protein belongs to the methyltransferase superfamily. RsmH family.

The protein resides in the cytoplasm. It catalyses the reaction cytidine(1402) in 16S rRNA + S-adenosyl-L-methionine = N(4)-methylcytidine(1402) in 16S rRNA + S-adenosyl-L-homocysteine + H(+). Functionally, specifically methylates the N4 position of cytidine in position 1402 (C1402) of 16S rRNA. This Rhodopseudomonas palustris (strain BisB18) protein is Ribosomal RNA small subunit methyltransferase H.